Reading from the N-terminus, the 456-residue chain is MTTLVPASLFLLLWTLPGKVLLSVALAKEDVKSGLKGSQPMSPSDFLDKLMGRTSGYDARIRPNFKGPPVNVTCNIFINSFGSVTETTMDYRVNVFLRQQWNDPRLAYREYPDDSLDLDPSMLDSIWKPDLFFANEKGANFHEVTTDNKLLRIFKNGNVLYSIRLTLILSCPMDLKNFPMDIQTCTMQLESFGYTMNDLMFEWLEDAPAVQVAEGLTLPQFILRDEKDLGYCTKHYNTGKFTCIEVKFHLERQMGYYLIQMYIPSLLIVILSWVSFWINMDAAPARVGLGITTVLTMTTQSSGSRASLPKVSYVKAIDIWMAVCLLFVFAALLEYAAVNFVSRQHKEFMRLRRRQRRQRMEEDIIRESRFYFRGYGLGHCLQARDGGPMEGSSIYSPQPPTPLLKEGETMRKLYVDRAKRIDTISRAVFPFTFLVFNIFYWVVYKVLRSEDIHQAL.

The N-terminal stretch at 1–27 (MTTLVPASLFLLLWTLPGKVLLSVALA) is a signal peptide. Over 28–256 (KEDVKSGLKG…KFHLERQMGY (229 aa)) the chain is Extracellular. A glycan (N-linked (GlcNAc...) asparagine) is linked at Asn71. Cystine bridges form between Cys171-Cys185 and Cys232-Cys243. Position 236–241 (236–241 (YNTGKF)) interacts with strychnine. Residues 257-278 (YLIQMYIPSLLIVILSWVSFWI) form a helical membrane-spanning segment. Residues 279–283 (NMDAA) are Cytoplasmic-facing. A helical transmembrane segment spans residues 284-304 (PARVGLGITTVLTMTTQSSGS). The Extracellular segment spans residues 305–315 (RASLPKVSYVK). The helical transmembrane segment at 316–336 (AIDIWMAVCLLFVFAALLEYA) threads the bilayer. The Cytoplasmic segment spans residues 337–423 (AVNFVSRQHK…YVDRAKRIDT (87 aa)). Residues 424–444 (ISRAVFPFTFLVFNIFYWVVY) form a helical membrane-spanning segment. At 445-456 (KVLRSEDIHQAL) the chain is on the extracellular side.

This sequence belongs to the ligand-gated ion channel (TC 1.A.9) family. Glycine receptor (TC 1.A.9.3) subfamily. GLRA4 sub-subfamily. In terms of assembly, homopentamer (in vitro). Heteropentamer composed of GLRA4 and GLRB. Detected in the retina inner plexiform layer, especially at the border between layer three and four (at protein level).

The protein resides in the postsynaptic cell membrane. Its subcellular location is the synapse. It localises to the perikaryon. The protein localises to the cell projection. It is found in the dendrite. The protein resides in the cell membrane. The enzyme catalyses chloride(in) = chloride(out). Inhibited by strychnine. Functionally, glycine receptors are ligand-gated chloride channels. Channel opening is triggered by extracellular glycine. Channel opening is also triggered by taurine and beta-alanine. Plays a role in the down-regulation of neuronal excitability. Contributes to the generation of inhibitory postsynaptic currents. The polypeptide is Glycine receptor subunit alpha-4 (Glra4) (Mus musculus (Mouse)).